Consider the following 185-residue polypeptide: Lactoylglutathione lyase (185 aa).

The segment at 1-22 (MASEARESPANNPGLSTNRDEA) is disordered. The region spanning 27–174 (IMQQTMFRIK…DGYWIEIFDL (148 aa)) is the VOC domain. Glutamine 30 and arginine 34 together coordinate substrate. Glutamine 30 is a binding site for Zn(2+). Glutamate 96 provides a ligand contact to Zn(2+). Residues asparagine 100, arginine 120, histidine 124, and 154 to 155 (KM) each bind substrate. Histidine 124 provides a ligand contact to Zn(2+). Glutamate 170 contributes to the Zn(2+) binding site. Glutamate 170 functions as the Proton donor/acceptor in the catalytic mechanism.

This sequence belongs to the glyoxalase I family. The cofactor is Zn(2+).

It catalyses the reaction (R)-S-lactoylglutathione = methylglyoxal + glutathione. It participates in secondary metabolite metabolism; methylglyoxal degradation; (R)-lactate from methylglyoxal: step 1/2. Catalyzes the conversion of hemimercaptal, formed from methylglyoxal and glutathione, to S-lactoylglutathione. The chain is Lactoylglutathione lyase from Arabidopsis thaliana (Mouse-ear cress).